The following is an 88-amino-acid chain: Small ribosomal subunit protein uS15c (88 aa).

The protein belongs to the universal ribosomal protein uS15 family. In terms of assembly, part of the 30S ribosomal subunit.

Its subcellular location is the plastid. It is found in the chloroplast. The polypeptide is Small ribosomal subunit protein uS15c (rps15) (Arabidopsis thaliana (Mouse-ear cress)).